Here is a 226-residue protein sequence, read N- to C-terminus: UPF0758 protein CHY_0341 (226 aa).

Residues Asn104–Phe226 enclose the MPN domain. 3 residues coordinate Zn(2+): His175, His177, and Asp188. Residues His175–Asp188 carry the JAMM motif motif.

This sequence belongs to the UPF0758 family.

In Carboxydothermus hydrogenoformans (strain ATCC BAA-161 / DSM 6008 / Z-2901), this protein is UPF0758 protein CHY_0341.